Reading from the N-terminus, the 149-residue chain is Large ribosomal subunit protein bL9 (149 aa).

It belongs to the bacterial ribosomal protein bL9 family.

In terms of biological role, binds to the 23S rRNA. This is Large ribosomal subunit protein bL9 from Persephonella marina (strain DSM 14350 / EX-H1).